The primary structure comprises 322 residues: tRNA U34 carboxymethyltransferase (322 aa).

Carboxy-S-adenosyl-L-methionine contacts are provided by residues Lys-91, Trp-105, Lys-110, Gly-129, 179–180 (LE), Met-195, Tyr-199, and Arg-314.

The protein belongs to the class I-like SAM-binding methyltransferase superfamily. CmoB family. In terms of assembly, homotetramer.

It catalyses the reaction carboxy-S-adenosyl-L-methionine + 5-hydroxyuridine(34) in tRNA = 5-carboxymethoxyuridine(34) in tRNA + S-adenosyl-L-homocysteine + H(+). Catalyzes carboxymethyl transfer from carboxy-S-adenosyl-L-methionine (Cx-SAM) to 5-hydroxyuridine (ho5U) to form 5-carboxymethoxyuridine (cmo5U) at position 34 in tRNAs. In Pseudomonas aeruginosa (strain LESB58), this protein is tRNA U34 carboxymethyltransferase.